A 492-amino-acid polypeptide reads, in one-letter code: Catalase isozyme 1 (492 aa).

Active-site residues include His65 and Asn138. Tyr348 contributes to the heme binding site.

It belongs to the catalase family. As to quaternary structure, homotetramer. Heme is required as a cofactor.

It localises to the peroxisome. The protein localises to the glyoxysome. The catalysed reaction is 2 H2O2 = O2 + 2 H2O. Functionally, occurs in almost all aerobically respiring organisms and serves to protect cells from the toxic effects of hydrogen peroxide. The protein is Catalase isozyme 1 (CAT1) of Solanum tuberosum (Potato).